The primary structure comprises 242 residues: HTH-type transcriptional regulator GadW (242 aa).

The HTH araC/xylS-type domain occupies glycine 139 to histidine 236. DNA-binding regions (H-T-H motif) lie at residues arginine 156–asparagine 177 and leucine 203–tyrosine 226.

In terms of assembly, homodimer.

Its function is as follows. Depending on the conditions (growth phase and medium), acts as a positive or negative regulator of gadA and gadBC. Repression occurs directly or via the repression of the expression of gadX. Activation occurs directly by the binding of GadW to the gadA and gadBC promoters. In Escherichia coli O6:H1 (strain CFT073 / ATCC 700928 / UPEC), this protein is HTH-type transcriptional regulator GadW (gadW).